We begin with the raw amino-acid sequence, 209 residues long: Small ribosomal subunit protein uS4 (209 aa).

The S4 RNA-binding domain maps to 99-164 (GRLDSVVYRM…QLRVKAALEA (66 aa)).

This sequence belongs to the universal ribosomal protein uS4 family. Part of the 30S ribosomal subunit. Contacts protein S5. The interaction surface between S4 and S5 is involved in control of translational fidelity.

One of the primary rRNA binding proteins, it binds directly to 16S rRNA where it nucleates assembly of the body of the 30S subunit. Its function is as follows. With S5 and S12 plays an important role in translational accuracy. The chain is Small ribosomal subunit protein uS4 from Aromatoleum aromaticum (strain DSM 19018 / LMG 30748 / EbN1) (Azoarcus sp. (strain EbN1)).